The chain runs to 297 residues: uncharacterized protein (297 aa).

9 helical membrane passes run 1 to 21 (MSWI…LGII), 32 to 52 (GSIL…IYVY), 72 to 92 (AMAL…NIPS), 98 to 118 (VLFF…YGGI), 120 to 140 (LIHK…ATGI), 194 to 214 (ILIE…IFAI), 218 to 238 (VYII…LFFC), 253 to 273 (LALI…IEIP), and 274 to 294 (AYIS…ASIL).

This sequence belongs to the TerC family.

The protein resides in the cell membrane. This is an uncharacterized protein from Rickettsia prowazekii (strain Madrid E).